A 510-amino-acid chain; its full sequence is 2,3-bisphosphoglycerate-independent phosphoglycerate mutase (510 aa).

Mn(2+) contacts are provided by Asp-13 and Ser-63. Ser-63 (phosphoserine intermediate) is an active-site residue. Substrate-binding positions include His-124, 154 to 155 (RD), Arg-186, Arg-192, 262 to 265 (RADR), and Lys-334. 5 residues coordinate Mn(2+): Asp-401, His-405, Asp-442, His-443, and His-461.

This sequence belongs to the BPG-independent phosphoglycerate mutase family. In terms of assembly, monomer. Mn(2+) is required as a cofactor.

The catalysed reaction is (2R)-2-phosphoglycerate = (2R)-3-phosphoglycerate. Its pathway is carbohydrate degradation; glycolysis; pyruvate from D-glyceraldehyde 3-phosphate: step 3/5. Its function is as follows. Catalyzes the interconversion of 2-phosphoglycerate and 3-phosphoglycerate. In Vibrio atlanticus (strain LGP32) (Vibrio splendidus (strain Mel32)), this protein is 2,3-bisphosphoglycerate-independent phosphoglycerate mutase.